We begin with the raw amino-acid sequence, 312 residues long: Elongation factor Ts (312 aa).

Residues threonine 80–valine 83 are involved in Mg(2+) ion dislocation from EF-Tu.

The protein belongs to the EF-Ts family.

The protein localises to the cytoplasm. In terms of biological role, associates with the EF-Tu.GDP complex and induces the exchange of GDP to GTP. It remains bound to the aminoacyl-tRNA.EF-Tu.GTP complex up to the GTP hydrolysis stage on the ribosome. In Paramagnetospirillum magneticum (strain ATCC 700264 / AMB-1) (Magnetospirillum magneticum), this protein is Elongation factor Ts.